The chain runs to 286 residues: Small ribosomal subunit protein uS15m (286 aa).

The transit peptide at 1–33 directs the protein to the mitochondrion; the sequence is MSIVGRNAILNLRISLCPLFMGKRSFVSSPVSN.

This sequence belongs to the universal ribosomal protein uS15 family. As to quaternary structure, component of the mitochondrial small ribosomal subunit (mt-SSU). Mature yeast 74S mitochondrial ribosomes consist of a small (37S) and a large (54S) subunit. The 37S small subunit contains a 15S ribosomal RNA (15S mt-rRNA) and 34 different proteins. The 54S large subunit contains a 21S rRNA (21S mt-rRNA) and 46 different proteins. The precursor is processed in two steps involving mitochondrial intermediate peptidase (MIP) and mitochondrial processing peptidase (MPP).

The protein localises to the mitochondrion. Functionally, component of the mitochondrial ribosome (mitoribosome), a dedicated translation machinery responsible for the synthesis of mitochondrial genome-encoded proteins, including at least some of the essential transmembrane subunits of the mitochondrial respiratory chain. The mitoribosomes are attached to the mitochondrial inner membrane and translation products are cotranslationally integrated into the membrane. The polypeptide is Small ribosomal subunit protein uS15m (MRPS28) (Saccharomyces cerevisiae (strain ATCC 204508 / S288c) (Baker's yeast)).